Consider the following 152-residue polypeptide: MIEFILNGQPVRVTEVPEDAPLLWVVREHLKLSGTKFGCGLGLCGACTVHINGEAARSCITPLSVVARQSVTTIEGLDPQHAHPLQRAWIAEQVPQCGYCQSGQIMQAAALLKKVPKPSDAQIVEAMDGNLCRCGTYQRIKIAIHRAAKEAA.

The 77-residue stretch at 1–77 (MIEFILNGQP…RQSVTTIEGL (77 aa)) folds into the 2Fe-2S ferredoxin-type domain. Positions 39, 44, and 47 each coordinate [2Fe-2S] cluster.

As to quaternary structure, heterodimer of an alpha chain and a beta chain.

It carries out the reaction isoquinoline + A + H2O = isoquinolin-1(2H)-one + AH2. In terms of biological role, specific towards N-containing N-heterocyclic substrates, including isoquinoline, isoquinolin-5-ol, phthalazine and quinazoline. In Brevundimonas diminuta (Pseudomonas diminuta), this protein is Isoquinoline 1-oxidoreductase subunit alpha (iorA).